Consider the following 170-residue polypeptide: Thialysine N-epsilon-acetyltransferase (170 aa).

The N-acetyltransferase domain maps to 4 to 166; that stretch reads TRIREARESD…FRFEGEAMRE (163 aa). 27 to 28 is a substrate binding site; it reads FE. Lys29 carries the post-translational modification N6-acetyllysine. Substrate is bound at residue Glu92. Acetyl-CoA contacts are provided by residues 94-96, 102-107, 133-135, and Tyr140; these read IYV, GQGIGT, and NKK. Residue Tyr140 is the Proton donor of the active site. Glu152 contacts substrate.

This sequence belongs to the acetyltransferase family. In terms of assembly, homodimer.

It localises to the cytoplasm. The enzyme catalyses S-(2-aminoethyl)-L-cysteine + acetyl-CoA = S-(2-acetamidoethyl)-L-cysteine + CoA + H(+). The catalysed reaction is an alkane-alpha,omega-diamine + acetyl-CoA = an N-acetylalkane-alpha,omega-diamine + CoA + H(+). In terms of biological role, catalyzes the N-acetylation of the amino acid thialysine (S-(2-aminoethyl)-L-cysteine), a L-lysine analog with the 4-methylene group substituted with a sulfur. May also catalyze acetylation of polyamines, such as norspermidine, spermidine or spermine. However, ability to acetylate polyamines is weak, suggesting that it does not act as a diamine acetyltransferase in vivo. The protein is Thialysine N-epsilon-acetyltransferase of Mus musculus (Mouse).